The following is a 796-amino-acid chain: uncharacterized protein (796 aa).

It is found in the mitochondrion. This is an uncharacterized protein from Dictyostelium discoideum (Social amoeba).